The chain runs to 830 residues: Lon protease (830 aa).

Positions 20-215 (LPAVAIRDVV…LLIKILANEV (196 aa)) constitute a Lon N-terminal domain. Position 367–374 (367–374 (GPPGVGKT)) interacts with ATP. Residues 602-781 (ENGVGISTGL…DEIVKIAFEK (180 aa)) enclose the Lon proteolytic domain. Residues Ser-687 and Lys-730 contribute to the active site. The segment at 784 to 830 (PKSSFKKSKTAPKKESAKKAAKSKKPAVKKPAVKKTKQVKKTAKKKK) is disordered. Residues 802-830 (KAAKSKKPAVKKPAVKKTKQVKKTAKKKK) show a composition bias toward basic residues.

The protein belongs to the peptidase S16 family. In terms of assembly, homohexamer. Organized in a ring with a central cavity.

It is found in the cytoplasm. The catalysed reaction is Hydrolysis of proteins in presence of ATP.. Functionally, ATP-dependent serine protease that mediates the selective degradation of mutant and abnormal proteins as well as certain short-lived regulatory proteins. Required for cellular homeostasis and for survival from DNA damage and developmental changes induced by stress. Degrades polypeptides processively to yield small peptide fragments that are 5 to 10 amino acids long. Binds to DNA in a double-stranded, site-specific manner. The sequence is that of Lon protease from Elusimicrobium minutum (strain Pei191).